We begin with the raw amino-acid sequence, 543 residues long: Plant intracellular Ras-group-related LRR protein 5 (543 aa).

LRR repeat units lie at residues L239 to L262, Y264 to E284, L285 to N307, T309 to L331, A332 to C354, S356 to L377, E378 to L400, R402 to T424, L426 to L448, and E449 to C470. The LRR 11; degenerate repeat unit spans residues S472–L494. The GVYW; degenerate motif lies at G495–Y502.

Belongs to the SHOC2 family. Widely expressed.

Functionally, leucine-rich repeat protein that likely mediates protein interactions, possibly in the context of signal transduction. The sequence is that of Plant intracellular Ras-group-related LRR protein 5 (IRL5) from Oryza sativa subsp. japonica (Rice).